The sequence spans 346 residues: tRNA N6-adenosine threonylcarbamoyltransferase (346 aa).

Residues histidine 110 and histidine 114 each contribute to the Fe cation site. Substrate-binding positions include 132–136, aspartate 165, glycine 178, and asparagine 274; that span reads LLSGG. Residue aspartate 298 participates in Fe cation binding.

Belongs to the KAE1 / TsaD family. The cofactor is Fe(2+).

It is found in the cytoplasm. It carries out the reaction L-threonylcarbamoyladenylate + adenosine(37) in tRNA = N(6)-L-threonylcarbamoyladenosine(37) in tRNA + AMP + H(+). In terms of biological role, required for the formation of a threonylcarbamoyl group on adenosine at position 37 (t(6)A37) in tRNAs that read codons beginning with adenine. Is involved in the transfer of the threonylcarbamoyl moiety of threonylcarbamoyl-AMP (TC-AMP) to the N6 group of A37, together with TsaE and TsaB. TsaD likely plays a direct catalytic role in this reaction. The polypeptide is tRNA N6-adenosine threonylcarbamoyltransferase (Borreliella burgdorferi (strain ZS7) (Borrelia burgdorferi)).